We begin with the raw amino-acid sequence, 118 residues long: UPF0148 protein LS215_1455 (118 aa).

Belongs to the UPF0148 family.

The sequence is that of UPF0148 protein LS215_1455 from Saccharolobus islandicus (strain L.S.2.15 / Lassen #1) (Sulfolobus islandicus).